Consider the following 199-residue polypeptide: NAD(P)H quinone oxidoreductase PST3 (199 aa).

The 189-residue stretch at 5-193 (VAIIIYSLYH…EIAFIQGKSF (189 aa)) folds into the Flavodoxin-like domain. Residues 11 to 15 (SLYHH) and 111 to 165 (IFVS…SPYG) each bind FMN.

The protein belongs to the WrbA family. FMN is required as a cofactor.

It is found in the cell membrane. The enzyme catalyses a quinone + NADH + H(+) = a quinol + NAD(+). The catalysed reaction is a quinone + NADPH + H(+) = a quinol + NADP(+). Its function is as follows. Flavodoxin-like protein (FLP) that plays a role in cell wall integrity, oxidative stress protection and virulence. FLPs act as NAD(P)H quinone oxidoreductases. Reduces ubiquinone (coenzyme Q), enabling it to serve as an antioxidant in the membrane. This chain is NAD(P)H quinone oxidoreductase PST3, found in Candida albicans (strain SC5314 / ATCC MYA-2876) (Yeast).